The sequence spans 476 residues: Adenosylhomocysteinase (476 aa).

The substrate site is built by Thr-67, Asp-142, and Glu-202. NAD(+) is bound at residue 203-205; sequence TTT. Residues Lys-232 and Asp-236 each coordinate substrate. Residues Asn-237, 266–271, Glu-289, Asn-324, 345–347, and Asn-390 contribute to the NAD(+) site; these read GYGDVG and IGH.

This sequence belongs to the adenosylhomocysteinase family. The cofactor is NAD(+).

Its subcellular location is the cytoplasm. It carries out the reaction S-adenosyl-L-homocysteine + H2O = L-homocysteine + adenosine. It participates in amino-acid biosynthesis; L-homocysteine biosynthesis; L-homocysteine from S-adenosyl-L-homocysteine: step 1/1. In terms of biological role, may play a key role in the regulation of the intracellular concentration of adenosylhomocysteine. The sequence is that of Adenosylhomocysteinase from Synechococcus sp. (strain WH7803).